Here is a 338-residue protein sequence, read N- to C-terminus: Heat-inducible transcription repressor HrcA (338 aa).

Belongs to the HrcA family.

Functionally, negative regulator of class I heat shock genes (grpE-dnaK-dnaJ and groELS operons). Prevents heat-shock induction of these operons. The chain is Heat-inducible transcription repressor HrcA from Streptomyces albus G.